Here is a 201-residue protein sequence, read N- to C-terminus: Small ribosomal subunit protein uS4c (201 aa).

The region spanning 89–152 (MRLDNILFRL…NSRTLVQNLL (64 aa)) is the S4 RNA-binding domain.

This sequence belongs to the universal ribosomal protein uS4 family. Part of the 30S ribosomal subunit. Contacts protein S5. The interaction surface between S4 and S5 is involved in control of translational fidelity.

Its subcellular location is the plastid. It localises to the chloroplast. Its function is as follows. One of the primary rRNA binding proteins, it binds directly to 16S rRNA where it nucleates assembly of the body of the 30S subunit. With S5 and S12 plays an important role in translational accuracy. This Olimarabidopsis pumila (Dwarf rocket) protein is Small ribosomal subunit protein uS4c (rps4).